Reading from the N-terminus, the 427-residue chain is Serine--tRNA ligase (427 aa).

231-233 (TAE) lines the L-serine pocket. 262-264 (RSE) is a binding site for ATP. L-serine is bound at residue E285. ATP is bound at residue 349–352 (EISS). S385 is an L-serine binding site.

Belongs to the class-II aminoacyl-tRNA synthetase family. Type-1 seryl-tRNA synthetase subfamily. In terms of assembly, homodimer. The tRNA molecule binds across the dimer.

Its subcellular location is the cytoplasm. The enzyme catalyses tRNA(Ser) + L-serine + ATP = L-seryl-tRNA(Ser) + AMP + diphosphate + H(+). The catalysed reaction is tRNA(Sec) + L-serine + ATP = L-seryl-tRNA(Sec) + AMP + diphosphate + H(+). The protein operates within aminoacyl-tRNA biosynthesis; selenocysteinyl-tRNA(Sec) biosynthesis; L-seryl-tRNA(Sec) from L-serine and tRNA(Sec): step 1/1. In terms of biological role, catalyzes the attachment of serine to tRNA(Ser). Is also able to aminoacylate tRNA(Sec) with serine, to form the misacylated tRNA L-seryl-tRNA(Sec), which will be further converted into selenocysteinyl-tRNA(Sec). The sequence is that of Serine--tRNA ligase from Listeria monocytogenes serotype 4b (strain CLIP80459).